Consider the following 603-residue polypeptide: F-box only protein 46 (603 aa).

The interval Tyr-20 to Glu-54 is disordered. 2 positions are modified to phosphoserine: Ser-21 and Ser-67. Disordered stretches follow at residues Gly-111–Ser-163, Glu-235–Lys-301, Glu-332–Cys-359, and Thr-396–Asp-442. The residue at position 347 (Thr-347) is a Phosphothreonine. The segment covering Thr-347–Ala-356 has biased composition (pro residues). In terms of domain architecture, F-box spans Arg-470–Asp-522.

In terms of assembly, part of a SCF (SKP1-cullin-F-box) protein ligase complex SCF(FBXO46) composed of CUL1, SKP1, RBX1 and FBXO46. Phosphorylated by ATM in response to DNA damage, promoting ubiquitination and degradation by the SCF(FBXO31) complex. Post-translationally, ATM-phosphorylated FBXO46 is ubiquitinated and degradaded by the SCF(FBXO31) complex in response to DNA damage.

It participates in protein modification; protein ubiquitination. Its function is as follows. Substrate-recognition component of the SCF(FBXO46) protein ligase complex, which mediates the ubiquitination and degradation of target proteins. In absence of stress, the SCF(FBXO46) complex catalyzes ubiquitination and degradation of MTOR-phosphorylated FBXO31. This is F-box only protein 46 (Fbxo46) from Rattus norvegicus (Rat).